The primary structure comprises 309 residues: tRNA dimethylallyltransferase 1 (309 aa).

An ATP-binding site is contributed by 14-21 (GPTASGKS). 16–21 (TASGKS) is a substrate binding site. Positions 39-42 (DSMQ) are interaction with substrate tRNA.

This sequence belongs to the IPP transferase family. In terms of assembly, monomer. Mg(2+) is required as a cofactor.

It catalyses the reaction adenosine(37) in tRNA + dimethylallyl diphosphate = N(6)-dimethylallyladenosine(37) in tRNA + diphosphate. Its function is as follows. Catalyzes the transfer of a dimethylallyl group onto the adenine at position 37 in tRNAs that read codons beginning with uridine, leading to the formation of N6-(dimethylallyl)adenosine (i(6)A). This chain is tRNA dimethylallyltransferase 1, found in Pelobacter propionicus (strain DSM 2379 / NBRC 103807 / OttBd1).